We begin with the raw amino-acid sequence, 1000 residues long: Probable coatomer subunit beta' (1000 aa).

WD repeat units follow at residues 13–52 (ARSD…LVKS), 55–94 (VCDV…RVHQ), 97–136 (AHSD…AMKQ), 140–180 (GHTH…PNFT), 183–224 (GHEK…CVQT), 227–266 (GHAQ…LETT), and 351–391 (LGSS…NKDF). The interval 863–1000 (PRQTETQLKA…MDDLNLDEED (138 aa)) is disordered. Residues 901-915 (EPEEEEEQEEFDDDQ) show a composition bias toward acidic residues. The segment covering 960-969 (SASSQQSAQD) has biased composition (low complexity). A compositionally biased stretch (acidic residues) spans 970-1000 (FQDDTQWSDEDFGDAENGDLNMDDLNLDEED).

The protein belongs to the WD repeat COPB2 family. In terms of assembly, oligomeric complex that consists of at least the alpha, beta, beta', gamma, delta, epsilon and zeta subunits.

The protein resides in the cytoplasm. It is found in the golgi apparatus membrane. Its subcellular location is the cytoplasmic vesicle. The protein localises to the COPI-coated vesicle membrane. Its function is as follows. The coatomer is a cytosolic protein complex that binds to dilysine motifs and reversibly associates with Golgi non-clathrin-coated vesicles, which further mediate biosynthetic protein transport from the ER, via the Golgi up to the trans Golgi network. Coatomer complex is required for budding from Golgi membranes, and is essential for the retrograde Golgi-to-ER transport of dilysine-tagged proteins. The sequence is that of Probable coatomer subunit beta' (copb-2) from Caenorhabditis elegans.